A 219-amino-acid chain; its full sequence is Large ribosomal subunit protein uL16 (219 aa).

This sequence belongs to the universal ribosomal protein uL16 family. As to quaternary structure, component of the small ribosomal subunit. Mature ribosomes consist of a small (40S) and a large (60S) subunit. The 40S subunit contains about 33 different proteins and 1 molecule of RNA (18S). The 60S subunit contains about 49 different proteins and 3 molecules of RNA (25S, 5.8S and 5S).

This Encephalitozoon cuniculi (strain GB-M1) (Microsporidian parasite) protein is Large ribosomal subunit protein uL16 (RPL10).